Consider the following 326-residue polypeptide: Undecaprenyl-phosphate 4-deoxy-4-formamido-L-arabinose transferase (326 aa).

Topologically, residues 1 to 235 (MFEIHPIKKV…TCLTTTPLRM (235 aa)) are cytoplasmic. A helical transmembrane segment spans residues 236-256 (LSLLGSIIATSGFSLAILLVV). Over 257–269 (LRLAFGSQWSGEG) the chain is Periplasmic. The helical transmembrane segment at 270-290 (VFMLFAVLFTFIGAQFIGMGL) threads the bilayer. Residues 291–326 (LGEYIGRIYNDVRARPRYFVQKVIRPASSIDIEENH) lie on the Cytoplasmic side of the membrane.

The protein belongs to the glycosyltransferase 2 family.

It localises to the cell inner membrane. It catalyses the reaction UDP-4-deoxy-4-formamido-beta-L-arabinose + di-trans,octa-cis-undecaprenyl phosphate = 4-deoxy-4-formamido-alpha-L-arabinopyranosyl di-trans,octa-cis-undecaprenyl phosphate + UDP. Its pathway is glycolipid biosynthesis; 4-amino-4-deoxy-alpha-L-arabinose undecaprenyl phosphate biosynthesis; 4-amino-4-deoxy-alpha-L-arabinose undecaprenyl phosphate from UDP-4-deoxy-4-formamido-beta-L-arabinose and undecaprenyl phosphate: step 1/2. It participates in bacterial outer membrane biogenesis; lipopolysaccharide biosynthesis. Its function is as follows. Catalyzes the transfer of 4-deoxy-4-formamido-L-arabinose from UDP to undecaprenyl phosphate. The modified arabinose is attached to lipid A and is required for resistance to polymyxin and cationic antimicrobial peptides. This chain is Undecaprenyl-phosphate 4-deoxy-4-formamido-L-arabinose transferase, found in Escherichia fergusonii (strain ATCC 35469 / DSM 13698 / CCUG 18766 / IAM 14443 / JCM 21226 / LMG 7866 / NBRC 102419 / NCTC 12128 / CDC 0568-73).